Here is a 102-residue protein sequence, read N- to C-terminus: Large ribosomal subunit protein bL21 (102 aa).

Belongs to the bacterial ribosomal protein bL21 family. In terms of assembly, part of the 50S ribosomal subunit. Contacts protein L20.

In terms of biological role, this protein binds to 23S rRNA in the presence of protein L20. This chain is Large ribosomal subunit protein bL21, found in Azorhizobium caulinodans (strain ATCC 43989 / DSM 5975 / JCM 20966 / LMG 6465 / NBRC 14845 / NCIMB 13405 / ORS 571).